Here is a 305-residue protein sequence, read N- to C-terminus: Ribonuclease BN (305 aa).

Zn(2+) contacts are provided by histidine 64, histidine 66, aspartate 68, histidine 69, histidine 141, aspartate 212, and histidine 270. Catalysis depends on aspartate 68, which acts as the Proton acceptor.

This sequence belongs to the RNase Z family. RNase BN subfamily. In terms of assembly, homodimer. Requires Zn(2+) as cofactor.

Its function is as follows. Zinc phosphodiesterase, which has both exoribonuclease and endoribonuclease activities. This is Ribonuclease BN from Salmonella agona (strain SL483).